A 560-amino-acid chain; its full sequence is MRPEPGGCCCRRPLRANGCVKNGEVRNGYVRSSTATAAAAGQIHHVTENGGLYKRPFNEVFEETPMLVAVLTYVGYGVLTLFGYLRDFLRHWRIEKCHHATEREEQKDFVSLYQDFENFYTRNLYMRIRDNWNRPICSVPGARVDIMERQSHDYNWSFKYTGNIIKGVINMGSYNYLGFARNTGSCQEAAAEVLKEYGAGVCSTRQEIGNLDKHEELEKLVARFLGVEAAMTYGMGFATNSMNIPALVGKGCLILSDELNHASLVLGARLSGATIRIFKHNNMQSLEKLLKDAIVYGQPRTRRPWKKILILVEGIYSMEGSIVRLPEVIALKKKYKAYLYLDEAHSIGALGPSGRGVVDYFGLDPEDVDVMMGTFTKSFGASGGYIGGKKALIDYLRTHSHSAVYATSMSPPVMEQIITSMKCIMGQDGTSLGKECVQQLAENTKYFRRRLKEMGFIIYGNEDSPVVPLMLYMPAKIGAFGREMLKRNVGVVVVGFPATPIIESRARFCLSAAHTKEILDTALKEIDEVGDLLQLKYSRRRLVPLLDRPFDETTYEETED.

A helical membrane pass occupies residues 65–85 (PMLVAVLTYVGYGVLTLFGYL). At lysine 377 the chain carries N6-(pyridoxal phosphate)lysine.

Belongs to the class-II pyridoxal-phosphate-dependent aminotransferase family. In terms of assembly, component of the serine palmitoyltransferase (SPT) complex, which is composed of SPTLC1, SPTLC2 or SPTLC3 and SPTSSA or SPTSSB. The heterodimer consisting of SPTLC1 and SPTLC2/SPTLC3 forms the catalytic core of the enzyme, while SPTSSA or SPTSSB subunits determine substrate specificity. SPT also interacts with ORMDL proteins, especially ORMDL3, which negatively regulate SPT activity in the presence of ceramides. Forms dimers of heterodimers with SPTLC1. Pyridoxal 5'-phosphate is required as a cofactor.

It localises to the endoplasmic reticulum membrane. The enzyme catalyses L-serine + hexadecanoyl-CoA + H(+) = 3-oxosphinganine + CO2 + CoA. It carries out the reaction octadecanoyl-CoA + L-serine + H(+) = 3-oxoeicosasphinganine + CO2 + CoA. Its pathway is lipid metabolism; sphingolipid metabolism. With respect to regulation, SPT complex catalytic activity is negatively regulated by ORMDL proteins, including ORMDL3, in the presence of ceramides. This mechanism allows to maintain ceramide levels at sufficient concentrations for the production of complex sphingolipids, but which prevents the accumulation of ceramides to levels that trigger apoptosis. Functionally, component of the serine palmitoyltransferase multisubunit enzyme (SPT) that catalyzes the initial and rate-limiting step in sphingolipid biosynthesis by condensing L-serine and activated acyl-CoA (most commonly palmitoyl-CoA) to form long-chain bases. The SPT complex is composed of SPTLC1, SPTLC2 or SPTLC3 and SPTSSA or SPTSSB. Within this complex, the heterodimer consisting of SPTLC1 and SPTLC2/SPTLC3 forms the catalytic core. The composition of the serine palmitoyltransferase (SPT) complex determines the substrate preference. The SPTLC1-SPTLC2-SPTSSA complex shows a strong preference for C16-CoA substrate, while the SPTLC1-SPTLC3-SPTSSA isozyme uses both C14-CoA and C16-CoA as substrates, with a slight preference for C14-CoA. The SPTLC1-SPTLC2-SPTSSB complex shows a strong preference for C18-CoA substrate, while the SPTLC1-SPTLC3-SPTSSB isozyme displays an ability to use a broader range of acyl-CoAs, without apparent preference. Crucial for adipogenesis. This Cricetulus griseus (Chinese hamster) protein is Serine palmitoyltransferase 2 (SPTLC2).